Consider the following 186-residue polypeptide: Ribosome-recycling factor (186 aa).

This sequence belongs to the RRF family.

The protein localises to the cytoplasm. Functionally, responsible for the release of ribosomes from messenger RNA at the termination of protein biosynthesis. May increase the efficiency of translation by recycling ribosomes from one round of translation to another. In Chlorobium phaeobacteroides (strain DSM 266 / SMG 266 / 2430), this protein is Ribosome-recycling factor.